A 366-amino-acid chain; its full sequence is Septin-1 (366 aa).

Residues 22-295 (KGFDFTLMVA…EGYRARCLQS (274 aa)) enclose the Septin-type G domain. The G1 motif stretch occupies residues 32 to 39 (GESGLGKS). Residues 32 to 39 (GESGLGKS), threonine 66, glycine 92, and 171 to 179 (KADALLPRE) contribute to the GTP site. A G3 motif region spans residues 89-92 (DTPG). The G4 motif stretch occupies residues 170–173 (GKAD). Serine 206 carries the post-translational modification Phosphoserine. 2 residues coordinate GTP: glycine 229 and arginine 244. A Phosphoserine; by AURKB modification is found at serine 247. Threonine 250 carries the post-translational modification Phosphothreonine. 2 positions are modified to phosphoserine; by AURKB: serine 306 and serine 314. A disordered region spans residues 347 to 366 (EKMQAQMQQSQAQGEQSDVL). The segment covering 349–366 (MQAQMQQSQAQGEQSDVL) has biased composition (low complexity).

This sequence belongs to the TRAFAC class TrmE-Era-EngA-EngB-Septin-like GTPase superfamily. Septin GTPase family. As to quaternary structure, septins polymerize into heterooligomeric protein complexes that form filaments, and can associate with cellular membranes, actin filaments and microtubules. GTPase activity is required for filament formation. Interacts with AURKB.

It localises to the cytoplasm. The protein resides in the cytoskeleton. The protein localises to the microtubule organizing center. Its subcellular location is the centrosome. It is found in the midbody. In terms of biological role, filament-forming cytoskeletal GTPase. May play a role in cytokinesis (Potential). The protein is Septin-1 of Rattus norvegicus (Rat).